We begin with the raw amino-acid sequence, 257 residues long: tRNA pseudouridine synthase A (257 aa).

Asp57 acts as the Nucleophile in catalysis. Tyr115 provides a ligand contact to substrate.

The protein belongs to the tRNA pseudouridine synthase TruA family. As to quaternary structure, homodimer.

It catalyses the reaction uridine(38/39/40) in tRNA = pseudouridine(38/39/40) in tRNA. Its function is as follows. Formation of pseudouridine at positions 38, 39 and 40 in the anticodon stem and loop of transfer RNAs. This is tRNA pseudouridine synthase A from Lawsonia intracellularis (strain PHE/MN1-00).